Here is a 142-residue protein sequence, read N- to C-terminus: ATP synthase epsilon chain (142 aa).

The protein belongs to the ATPase epsilon chain family. F-type ATPases have 2 components, CF(1) - the catalytic core - and CF(0) - the membrane proton channel. CF(1) has five subunits: alpha(3), beta(3), gamma(1), delta(1), epsilon(1). CF(0) has three main subunits: a, b and c.

The protein resides in the cell inner membrane. Functionally, produces ATP from ADP in the presence of a proton gradient across the membrane. The sequence is that of ATP synthase epsilon chain from Shewanella woodyi (strain ATCC 51908 / MS32).